A 1604-amino-acid chain; its full sequence is Putative surface cell antigen sca2 (1604 aa).

An N-terminal signal peptide occupies residues 1–33 (MSLQNSHSKKYVLTFFMSTCLLTSSFLSTSARA). Disordered stretches follow at residues 324–354 (TTKP…RTKP), 554–603 (NVNN…SNPN), and 1183–1240 (QQEN…KSLL). Residues 554-564 (NVNNNSNKGQN) show a composition bias toward low complexity. The span at 568–587 (ILPPTPPLNGSMPPSPPPPL) shows a compositional bias: pro residues. Basic and acidic residues-rich tracts occupy residues 1193–1213 (SSTK…KSDS) and 1227–1240 (SKND…KSLL). The Autotransporter domain occupies 1325–1604 (EASINRGVWI…QGLIKLKVNL (280 aa)).

The protein resides in the cell outer membrane. The protein is Putative surface cell antigen sca2 (sca2) of Rickettsia felis (strain ATCC VR-1525 / URRWXCal2) (Rickettsia azadi).